A 161-amino-acid polypeptide reads, in one-letter code: MSATDLSPTSLREAFGHFPSGVIAIAAEVDGTRVGLAASTFVPVSLEPPLVAFCVQNSSTTWPKLKDLPSLGISVLGEAHDTAARTLAAKTGDRFAGLETESRDSGAVFINGTSVWLESAIEQLVPAGDHTIVVLRVSDIVINEAVPPIVFHRSAFRKLGA.

FMN contacts are provided by residues Asp-30, 37–40 (AAST), 54–61 (CVQNSSTT), Ala-88, Arg-94, and Phe-151.

The protein belongs to the non-flavoprotein flavin reductase family.

The protein resides in the cytoplasm. It catalyses the reaction FMNH2 + NAD(+) = FMN + NADH + 2 H(+). It carries out the reaction FADH2 + NAD(+) = FAD + NADH + 2 H(+). It functions in the pathway sulfur metabolism; dibenzothiophene degradation. In terms of biological role, an NADH:FMN oxidoreductase which supplies reduced FMN for the '4S' desulfurization pathway that removes covalently bound sulfur from dibenzothiophene (DBT) without breaking carbon-carbon bonds. Can also use FAD. Provides DszC and probably also DszA (DBT-monooxygenase and DBTO2-monooxygenase respectively) with reduced flavin (FMN and/or FAD). This chain is NADH:FMN oxidoreductase, found in Mycolicibacterium goodii (Mycobacterium goodii).